A 141-amino-acid chain; its full sequence is MIDERDKIILEILSKDARTPFTEIAKKLGISETAVRKRVKALEEKGIIEGYTIRINPKKLGYSLVTITGVDTRPEKLFEVAEKLKEFEFVRELYLSSGDHMIMAVIWARDGEDLADIISNKIGKIDGVTKVCPAIILEKLK.

One can recognise an HTH asnC-type domain in the interval Ile2 to Ser63. The segment at residues Phe21–Lys40 is a DNA-binding region (H-T-H motif).

Homooctamer; tetramer of dimers.

Functionally, DNA-binding protein that negatively regulates its own transcription. Interferes with RNA polymerase (RNAP) recruitment by inhibiting the association of RNAP with the TBP-TFB promoter complex. The chain is HTH-type transcriptional regulator LrpA (lrpA) from Pyrococcus horikoshii (strain ATCC 700860 / DSM 12428 / JCM 9974 / NBRC 100139 / OT-3).